A 160-amino-acid chain; its full sequence is Phosphopantetheine adenylyltransferase (160 aa).

Position 11 (Thr-11) interacts with substrate. Residues 11-12 (TF) and His-19 contribute to the ATP site. 3 residues coordinate substrate: Lys-43, Leu-75, and Arg-89. ATP-binding positions include 90 to 92 (GLR), Glu-100, and 125 to 131 (HMFVSAS).

It belongs to the bacterial CoaD family. In terms of assembly, homohexamer. Requires Mg(2+) as cofactor.

Its subcellular location is the cytoplasm. The catalysed reaction is (R)-4'-phosphopantetheine + ATP + H(+) = 3'-dephospho-CoA + diphosphate. It participates in cofactor biosynthesis; coenzyme A biosynthesis; CoA from (R)-pantothenate: step 4/5. Reversibly transfers an adenylyl group from ATP to 4'-phosphopantetheine, yielding dephospho-CoA (dPCoA) and pyrophosphate. The protein is Phosphopantetheine adenylyltransferase of Methylobacillus flagellatus (strain ATCC 51484 / DSM 6875 / VKM B-1610 / KT).